A 536-amino-acid polypeptide reads, in one-letter code: Putative lipase ATG15 (536 aa).

Residues 1–8 are Cytoplasmic-facing; that stretch reads MGNPTLMR. A helical; Signal-anchor for type II membrane protein membrane pass occupies residues 9–31; the sequence is WPVTRILVLGLVVTVLYKAMAIY. The Lumenal portion of the chain corresponds to 32-536; it reads SSRRAPVQVC…YCLEYGPELR (505 aa). 3 N-linked (GlcNAc...) asparagine glycosylation sites follow: asparagine 152, asparagine 187, and asparagine 293. Catalysis depends on serine 309, which acts as the Charge relay system. N-linked (GlcNAc...) asparagine glycosylation is found at asparagine 426 and asparagine 516.

This sequence belongs to the AB hydrolase superfamily. Lipase family. In terms of assembly, binds to both phosphatidylinositol (PI) and phosphatidylinositol 3,5-bisphosphate (PIP2).

It is found in the endosome. The protein localises to the multivesicular body membrane. Its subcellular location is the prevacuolar compartment membrane. The catalysed reaction is a triacylglycerol + H2O = a diacylglycerol + a fatty acid + H(+). Lipase which is essential for lysis of subvacuolar cytoplasm to vacuole targeted bodies and intravacuolar autophagic bodies. Involved in the lysis of intravacuolar multivesicular body (MVB) vesicles. The intravacuolar membrane disintegration by ATG15 is critical to life span extension. This is Putative lipase ATG15 (ATG15) from Pichia angusta (Yeast).